Reading from the N-terminus, the 279-residue chain is Borealin (279 aa).

The segment covering 135 to 152 has biased composition (basic residues); that stretch reads KTKAKVAAKKPSTARKTR. Residues 135–180 form a disordered region; sequence KTKAKVAAKKPSTARKTRASTANLTNTSKRTSKRGRATPSASKQIE. Positions 153–163 are enriched in polar residues; sequence ASTANLTNTSK.

Belongs to the borealin family. Component of the CPC at least composed of survivin/birc5, incenp, cdca8/borealin and/or cdca9/dasra-A, and aurkb/aurora-B. Interacts with incenp (via N-terminus).

It localises to the nucleus. It is found in the chromosome. The protein localises to the centromere. Its subcellular location is the cytoplasm. The protein resides in the cytoskeleton. It localises to the spindle. In terms of biological role, component of the chromosomal passenger complex (CPC), a complex that acts as a key regulator of mitosis. The CPC complex has essential functions at the centromere in ensuring correct chromosome alignment and segregation and is required for chromatin-induced microtubule stabilization and spindle assembly. Contributes to CPC function by facilitating loading of the CPC onto chromosomes. The sequence is that of Borealin (cdca8) from Xenopus tropicalis (Western clawed frog).